Here is a 1482-residue protein sequence, read N- to C-terminus: Cystic fibrosis transmembrane conductance regulator (1482 aa).

Topologically, residues 1-77 (MQRSPLEKAN…KLINALRRCF (77 aa)) are cytoplasmic. The chain crosses the membrane as a helical span at residues 78 to 98 (FWRFVFHGIILYLGEVTKAVQ). The region spanning 81-365 (FVFHGIILYL…WAVQTWYDSL (285 aa)) is the ABC transmembrane type-1 1 domain. At 99-122 (PLLLGRIIASYDPDNKVERSIAIY) the chain is on the extracellular side. The chain crosses the membrane as a helical span at residues 123–146 (LGIGLCLLFIVRTLLLHPAIFGLH). Residues 147–195 (HMGMQMRIALFSLIYKKTLKLSSRVLDKISTGQLISLLSNNLNKFDEGL) are Cytoplasmic-facing. The chain crosses the membrane as a helical span at residues 196-216 (ALAHFVWIVPLQVVLLMGLLW). Topologically, residues 217–222 (DLLQAS) are extracellular. The chain crosses the membrane as a helical span at residues 223–243 (AFCGLAFLIVLALFQAWLGQM). Residues 244–298 (MMKYRERRAGKINERLVITSEMIDNIQSVKAYCWEEAMEKMIENLRETELKLTRK) lie on the Cytoplasmic side of the membrane. The helical transmembrane segment at 299 to 319 (TAYVRYFNSSAFFFSGFFVVF) threads the bilayer. Over 320–339 (LAVLPYALIKGIILRKIFTT) the chain is Extracellular. Residues 340-358 (ISFCIVLRMAVTRQFPWAV) traverse the membrane as a helical segment. Residues 359–859 (QTWYDSLGAI…YLRYITIHKN (501 aa)) lie on the Cytoplasmic side of the membrane. Residues W401, S434, 458 to 465 (GSTGAGKT), and Q493 contribute to the ATP site. Residues 423 to 646 (NGDNGLFFSN…RPDFSSKLMG (224 aa)) enclose the ABC transporter 1 domain. A lipid anchor (S-palmitoyl cysteine) is attached at C524. S549 and S660 each carry phosphoserine. A disordered R region region spans residues 654–832 (SAERRSSILT…DEINEEDLKE (179 aa)). A Phosphoserine; by PKA modification is found at S670. S686 is modified (phosphoserine). Residue K688 forms a Glycyl lysine isopeptide (Lys-Gly) (interchain with G-Cter in ubiquitin) linkage. 6 positions are modified to phosphoserine: S700, S712, S737, S769, S796, and S814. A helical membrane pass occupies residues 860–880 (LVFVLIWCLVIFLVEVAASLV). Residues 860–1156 (LVFVLIWCLV…AVNSSIDVDS (297 aa)) enclose the ABC transmembrane type-1 2 domain. Residues 881–919 (GLWLLEDISFKDKTNGTNGANNTFPVIITDTSKYYLFYI) are Extracellular-facing. Residues N895 and N901 are each glycosylated (N-linked (GlcNAc...) asparagine). A discontinuously helical membrane pass occupies residues 920–940 (YVGIADTFFALGIFRGLPLVH). The Cytoplasmic portion of the chain corresponds to 941–991 (TLISVSKILHHKMLYSVLKAPMSTFNTLKPGGILNRFSKDIAILDDLLPLT). The chain crosses the membrane as a helical span at residues 992-1012 (IFDFIQLILIVVGALIVVSAI). Residues 1013 to 1014 (RP) lie on the Extracellular side of the membrane. Residues 1015–1035 (YIFLATVPVIIAFIMLRAYFL) form a helical membrane-spanning segment. Residues 1036–1096 (QTSQQLKQLE…TASWFLYLST (61 aa)) are Cytoplasmic-facing. The helical transmembrane segment at 1097–1117 (LRWFQMRIELVFVIFFIAVTF) threads the bilayer. Residues 1118 to 1131 (ISILTTGDGEGRVG) lie on the Extracellular side of the membrane. Residues 1132–1152 (ILLTLAMNIMSTLQWAVNSSI) traverse the membrane as a helical segment. Over 1153-1482 (DVDSLMRSVS…TEEEVQETRL (330 aa)) the chain is Cytoplasmic. The ABC transporter 2 domain occupies 1212–1445 (MIVKDLTAKY…KSLYRQAISH (234 aa)). ATP contacts are provided by residues Y1221 and 1246–1253 (GRTGSGKS). The tract at residues 1388-1482 (RVLKNAFANC…TEEEVQETRL (95 aa)) is interaction with GORASP2. C1397 is lipidated: S-palmitoyl cysteine. 2 positions are modified to phosphoserine: S1446 and S1458. The PDZ-binding signature appears at 1480 to 1482 (TRL).

This sequence belongs to the ABC transporter superfamily. ABCC family. CFTR transporter (TC 3.A.1.202) subfamily. Monomer; does not require oligomerization for channel activity. May form oligomers in the membrane. Interacts with SLC26A3, SLC26A6 and NHERF1. Interacts with SHANK2. Interacts with MYO6. Interacts (via C-terminus) with GOPC (via PDZ domain); this promotes CFTR internalization and thereby decreases channel activity. Interacts with SLC4A7 through NHERF1. Found in a complex with MYO5B and RAB11A. Interacts with ANO1. Interacts with SLC26A8. Interacts with AHCYL1; the interaction increases CFTR activity. Interacts with CSE1L. The core-glycosylated form interacts with GORASP2 (via PDZ GRASP-type 1 domain) in respone to ER stress. Interacts with MARCHF2; the interaction leads to CFTR ubiqtuitination and degradation. Interacts with ADGRG2. In terms of processing, N-glycosylated. Phosphorylated; cAMP treatment promotes phosphorylation and activates the channel. Dephosphorylation decreases the ATPase activity (in vitro). Phosphorylation at PKA sites activates the channel. Phosphorylation at PKC sites enhances the response to phosphorylation by PKA. Phosphorylated by AMPK; this inhibits channel activity. Post-translationally, ubiquitinated, leading to its degradation in the lysosome. Deubiquitination by USP10 in early endosomes enhances its endocytic recycling to the cell membrane. Ubiquitinated by RNF185 during ER stress. Ubiquitinated by MARCHF2.

The protein localises to the apical cell membrane. The protein resides in the early endosome membrane. Its subcellular location is the cell membrane. It localises to the recycling endosome membrane. It is found in the endoplasmic reticulum membrane. The protein localises to the nucleus. The enzyme catalyses ATP + H2O + closed Cl(-) channel = ADP + phosphate + open Cl(-) channel.. It catalyses the reaction chloride(in) = chloride(out). The catalysed reaction is hydrogencarbonate(in) = hydrogencarbonate(out). It carries out the reaction ATP + H2O = ADP + phosphate + H(+). In terms of biological role, epithelial ion channel that plays an important role in the regulation of epithelial ion and water transport and fluid homeostasis. Mediates the transport of chloride ions across the cell membrane. Possesses an intrinsic ATPase activity and utilizes ATP to gate its channel; the passive flow of anions through the channel is gated by cycles of ATP binding and hydrolysis by the ATP-binding domains. The ion channel is also permeable to HCO(3)(-); selectivity depends on the extracellular chloride concentration. Exerts its function also by modulating the activity of other ion channels and transporters. Contributes to the regulation of the pH and the ion content of the epithelial fluid layer. Modulates the activity of the epithelial sodium channel (ENaC) complex, in part by regulating the cell surface expression of the ENaC complex. May regulate bicarbonate secretion and salvage in epithelial cells by regulating the transporter SLC4A7. Can inhibit the chloride channel activity of ANO1. Plays a role in the chloride and bicarbonate homeostasis during sperm epididymal maturation and capacitation. In Didelphis virginiana (North American opossum), this protein is Cystic fibrosis transmembrane conductance regulator.